We begin with the raw amino-acid sequence, 125 residues long: Large ribosomal subunit protein bL21 (125 aa).

Belongs to the bacterial ribosomal protein bL21 family. In terms of assembly, part of the 50S ribosomal subunit. Contacts protein L20.

Its function is as follows. This protein binds to 23S rRNA in the presence of protein L20. The polypeptide is Large ribosomal subunit protein bL21 (Synechococcus sp. (strain CC9311)).